Consider the following 121-residue polypeptide: Small ribosomal subunit protein uS11 (121 aa).

This sequence belongs to the universal ribosomal protein uS11 family. In terms of assembly, part of the 30S ribosomal subunit. Interacts with proteins S7 and S18. Binds to IF-3.

Located on the platform of the 30S subunit, it bridges several disparate RNA helices of the 16S rRNA. Forms part of the Shine-Dalgarno cleft in the 70S ribosome. The chain is Small ribosomal subunit protein uS11 from Ureaplasma parvum serovar 3 (strain ATCC 27815 / 27 / NCTC 11736).